Reading from the N-terminus, the 293-residue chain is MKRVILFLITNLAVMLVLSATLRILGLDRFITAEGLNLNALLMFSLVVGFTGSFISLLISKPMAKYSTGAQVIDPNAPRSQREAWLLDTVYQLADRAGIGRPEVAIYEGAPNAFATGAFKNDALVAVSTGLLESMREEEVAAVLGHEVAHIANGDMVTLTLIQGVVNTFVVFLARVVGYFVDRTIFRTERGVGPGYYVTVIVCEIVFGVLASIIVAWFSRQREYRADAGAAQLLGAREPMIHALARLGGLEPGDLPKSFQASGIAGGGAISALFSSHPPIPARIAALQQMRLS.

2 consecutive transmembrane segments (helical) span residues 4–24 (VILFLITNLAVMLVLSATLRI) and 40–60 (ALLMFSLVVGFTGSFISLLIS). A Zn(2+)-binding site is contributed by His146. Glu147 is a catalytic residue. His150 contributes to the Zn(2+) binding site. A run of 2 helical transmembrane segments spans residues 161–181 (LIQGVVNTFVVFLARVVGYFV) and 198–218 (VTVIVCEIVFGVLASIIVAWF). Residue Glu223 coordinates Zn(2+).

This sequence belongs to the peptidase M48B family. The cofactor is Zn(2+).

It is found in the cell inner membrane. This Bordetella avium (strain 197N) protein is Protease HtpX homolog.